We begin with the raw amino-acid sequence, 386 residues long: MLQEMHKKFESLFDVKADVRAFAPGRINLIGEHTDYNGGYVFPAAIELGTYGLASKRTDRIIQLYSNNFEDTGIVSFTLDELEFNEQHDWANYPKGVVKYLKEEFNDINQGFNILVEGNIPNGASLSSSASIELLTGWLIKQLFNLHLERLQLIKLGQVVENKFMGVNSGIMDQFIIGMGKAEHAILLDTATLDFDYVPAKFGDYVISIMNTNKRRSLTESKYNERRSECENALSQLQQQLEITSLGELSLAQFEKYQSLITDEVVCRRAKHAISENERTKLAHKALADNNFEQFGQLLNASHKSLKEDYEVTGIELDTLAETAQQVEGVLGARMTGAGFAGCAIALVDKNSIQKLEDEVSKAYIDKIGYAPSFYHVGISDGVKAL.

32–35 (EHTD) is a substrate binding site. Residues S66 and 123-129 (GASLSSS) contribute to the ATP site. Mg(2+)-binding residues include S129 and E161. The Proton acceptor role is filled by D173. Y223 lines the substrate pocket.

Belongs to the GHMP kinase family. GalK subfamily.

It localises to the cytoplasm. It carries out the reaction alpha-D-galactose + ATP = alpha-D-galactose 1-phosphate + ADP + H(+). The protein operates within carbohydrate metabolism; galactose metabolism. In terms of biological role, catalyzes the transfer of the gamma-phosphate of ATP to D-galactose to form alpha-D-galactose-1-phosphate (Gal-1-P). This chain is Galactokinase, found in Staphylococcus saprophyticus subsp. saprophyticus (strain ATCC 15305 / DSM 20229 / NCIMB 8711 / NCTC 7292 / S-41).